The sequence spans 73 residues: MNYPIVIYPCAEGGFVAEIPALCGCLAQGETLEETLEELMIVKDLWLETAQTHNQKLPSLEAEIAKIKMLSAA.

This sequence belongs to the UPF0150 family.

This Synechocystis sp. (strain ATCC 27184 / PCC 6803 / Kazusa) protein is UPF0150 protein ssl0259.